The chain runs to 472 residues: MEEFQFIKYKGFDHVFKYSGPWLWWLVGFYLCLPILAYTLLPYLTMNGTISGKRKTVSIFVLGDLGHSPRMCYHAKSFSKLDYYVNLCGYLEEQPPFDIIDDINIDIYPITVTKNTSNLPFILFAAKKMVVQFFQLLKLLSDFRGTDYVLIQNPPSIPILLIVLAYIKVFSRKTKLIIDWHNLNYTILNLKFQNLKHPLVRILKTYERVLGQFADYNITVTRQMKEFLIKEFNFNKKKIITLHDRPGEQFKPLESLGVTKQEILESHDIFRDIQNISKYKILVSSTSFTPDEDFNLLLSALNQYDNSLAERGLPPILIIITGKGPLKSQFLQKVKQLNFSDNVIIKNAWLSSEDYPLILSVADLSISLHTSSSGIDLPMKIVDFFGCGIPVITLRFPAIGELVTHGTNGLITKSDKDSSVNESQEIYRLLTEAFKNDELLDKIKQGALKESNLRWEENWNNKMGKRFEYSTD.

The Lumenal segment spans residues 1–20 (MEEFQFIKYKGFDHVFKYSG). The helical transmembrane segment at 21–41 (PWLWWLVGFYLCLPILAYTLL) threads the bilayer. The Cytoplasmic segment spans residues 42 to 118 (PYLTMNGTIS…PITVTKNTSN (77 aa)). Residues 119–139 (LPFILFAAKKMVVQFFQLLKL) constitute an intramembrane region (helical). Residues 140 to 472 (LSDFRGTDYV…MGKRFEYSTD (333 aa)) lie on the Cytoplasmic side of the membrane.

It belongs to the glycosyltransferase group 1 family.

The protein localises to the endoplasmic reticulum membrane. The catalysed reaction is an N,N'-diacetylchitobiosyl-diphospho-di-trans,poly-cis-dolichol + GDP-alpha-D-mannose = a beta-D-Man-(1-&gt;4)-beta-D-GlcNAc-(1-&gt;4)-alpha-D-GlcNAc-diphospho-di-trans,poly-cis-dolichol + GDP + H(+). It participates in protein modification; protein glycosylation. Its function is as follows. Participates in the formation of the lipid-linked precursor oligosaccharide for N-glycosylation. Involved in assembling the dolichol-pyrophosphate-GlcNAc(2)-Man(5) intermediate on the cytoplasmic surface of the ER. The polypeptide is Chitobiosyldiphosphodolichol beta-mannosyltransferase (ALG1) (Debaryomyces hansenii (strain ATCC 36239 / CBS 767 / BCRC 21394 / JCM 1990 / NBRC 0083 / IGC 2968) (Yeast)).